The sequence spans 334 residues: D-alanine--D-alanine ligase (334 aa).

The region spanning 111-315 is the ATP-grasp domain; the sequence is KRVCLSHGVP…YEDLCIEILR (205 aa). 141–196 is a binding site for ATP; that stretch reads AAEFGLPLMLKAPHEGSTIGIAKVETAEGMQAGFDLCAKYEAVVLVEQFVKGRELT. Residues Asp268, Glu282, and Asn284 each contribute to the Mg(2+) site.

It belongs to the D-alanine--D-alanine ligase family. Mg(2+) serves as cofactor. The cofactor is Mn(2+).

Its subcellular location is the cytoplasm. The enzyme catalyses 2 D-alanine + ATP = D-alanyl-D-alanine + ADP + phosphate + H(+). Its pathway is cell wall biogenesis; peptidoglycan biosynthesis. Cell wall formation. This Herminiimonas arsenicoxydans protein is D-alanine--D-alanine ligase.